Reading from the N-terminus, the 512-residue chain is PTS system mannitol-specific EIICB component (512 aa).

The Cytoplasmic segment spans residues 1 to 28 (MSQTEEKKGIGRRVQAFGSFLSSMIMPN). In terms of domain architecture, PTS EIIC type-2 spans 17–349 (FGSFLSSMIM…MKFTREPKQD (333 aa)). A helical transmembrane segment spans residues 29-50 (IGAFIAWGFIAAIFIDNGWLPN). At 51–54 (KDLA) the chain is on the extracellular side. The chain crosses the membrane as a helical span at residues 55-75 (TLAGPMITYLIPLLIAFSGGR). The Cytoplasmic segment spans residues 76–139 (LIYDLRGGII…QGFEMLFNNF (64 aa)). Residues 140–161 (SAGILGFIMTIAGFKILAPLMK) traverse the membrane as a helical segment. Residues 162 to 170 (FIMHILSVA) are Extracellular-facing. The helical transmembrane segment at 171-191 (VEALVHAHLLPLVSILVEPAK) threads the bilayer. Topologically, residues 192-278 (IVFLNNAINH…VLMRPLLFIA (87 aa)) are cytoplasmic. Residues 279 to 298 (VILGGMTGVATYQATGFGFK) form a helical membrane-spanning segment. The Extracellular segment spans residues 299–318 (SPASPGSFIVYCLNAPRGEF). A helical membrane pass occupies residues 319 to 340 (LHMLLGVFLAALVSFVVAALIM). The Cytoplasmic segment spans residues 341-512 (KFTREPKQDL…LNNLKKDDQA (172 aa)). Residues 355-402 (AQMENTKGKKSSVASKLVSSDKNVNTEENASGNVSETSSSDDDPEALL) form a disordered region. The segment covering 365-376 (SSVASKLVSSDK) has biased composition (low complexity). Residues 380–392 (TEENASGNVSETS) are compositionally biased toward polar residues. A PTS EIIB type-2 domain is found at 419-512 (NHVIFACDAG…LNNLKKDDQA (94 aa)). The Phosphocysteine intermediate; for EIIB activity role is filled by Cys-425. Position 425 is a phosphocysteine; by EIIA (Cys-425).

In terms of assembly, homodimer.

The protein localises to the cell membrane. The catalysed reaction is D-mannitol(out) + N(pros)-phospho-L-histidyl-[protein] = D-mannitol 1-phosphate(in) + L-histidyl-[protein]. Functionally, the phosphoenolpyruvate-dependent sugar phosphotransferase system (sugar PTS), a major carbohydrate active transport system, catalyzes the phosphorylation of incoming sugar substrates concomitantly with their translocation across the cell membrane. The enzyme II CmtAB PTS system is involved in D-mannitol transport. In Staphylococcus aureus (strain Mu50 / ATCC 700699), this protein is PTS system mannitol-specific EIICB component (mtlA).